Here is a 352-residue protein sequence, read N- to C-terminus: MIVDDSAIVRQVMQAILNKDPGIEVISAVADPIFAMNRMAIQWPDVIVLDIEMPRMDGVTFLRKIMAERPTPVVICSTLTDKGAETTMQALSAGAVSIVTKPKIGLKDFIQDAASDITNAVKAAAKANMSNIRAPKAAVKVREKNGVESLIPCGASAMSKTTEHVVAIGTSTGGTQALEFLLKALPTNAPGIVVVQHMPEKFTASFAERLDSICDIRVSEARHNDRVLPGHALIAPGGKHMMLKRSGAQYLVEIIDGPLVNRHKPSVDVLFRSTAKCAGKNAVGFILTGMGDDGARGLKDMLDAGAPTIAQDEKSCVVFGMPKEAIALGAAGKILPLAQIPQEIMRYAHLKD.

A Response regulatory domain is found at 1–116 (MIVDDSAIVR…KDFIQDAASD (116 aa)). Position 50 is a 4-aspartylphosphate (Asp50). The 193-residue stretch at 159–351 (SKTTEHVVAI…QEIMRYAHLK (193 aa)) folds into the CheB-type methylesterase domain. Active-site residues include Ser171, His197, and Asp293.

The protein belongs to the CheB family. Post-translationally, phosphorylated by CheA. Phosphorylation of the N-terminal regulatory domain activates the methylesterase activity.

The protein resides in the cytoplasm. The catalysed reaction is [protein]-L-glutamate 5-O-methyl ester + H2O = L-glutamyl-[protein] + methanol + H(+). The enzyme catalyses L-glutaminyl-[protein] + H2O = L-glutamyl-[protein] + NH4(+). Involved in chemotaxis. Part of a chemotaxis signal transduction system that modulates chemotaxis in response to various stimuli. Catalyzes the demethylation of specific methylglutamate residues introduced into the chemoreceptors (methyl-accepting chemotaxis proteins or MCP) by CheR. Also mediates the irreversible deamidation of specific glutamine residues to glutamic acid. This Shewanella denitrificans (strain OS217 / ATCC BAA-1090 / DSM 15013) protein is Protein-glutamate methylesterase/protein-glutamine glutaminase 2.